The following is a 1377-amino-acid chain: Protein RhsA (1377 aa).

28 consecutive repeat copies span residues 330 to 352 (GKQVRSFTYDDKYRGRMVAHRHT), 353 to 374 (GRPEIRYRYDSDGRVTEQLNPA), 375 to 417 (GLSY…EHAD), 418 to 438 (GSVTQSQFDAVGRLRAQTDAA), 439 to 460 (GRTTEYSPDVVTGLITRITTPD), 461 to 481 (GRASAFYYNHHNQLTSATGPD), 482 to 502 (GLELRREYDELGRLIQETAPD), 503 to 525 (GDITRYRYDNPHSDLPCATEDAT), 526 to 546 (GSRKTMTWSRYGQLLSFTDCS), 547 to 567 (GYVTRYDHDRFGQMTAVHREE), 568 to 588 (GLSQYRAYDSRGQLIAVKDTQ), 589 to 609 (GHETRYEYNIAGDLTAVIAPD), 610 to 629 (GSRNGTQYDAWGKAVRTTQG), 630 to 650 (GLTRSMEYDAAGRVIRLTSEN), 651 to 671 (GSHTTFRYDVLDRLIQETGFD), 672 to 691 (GRTQRYHHDLTGKLIRSEDE), 692 to 711 (GLVTHWHYDEADRLTHRTVK), 712 to 734 (GETAERWQYDERGWLTDISHISE), 735 to 758 (GHRVAVHYRYDEKGRLTGERQTVH), 808 to 828 (GDTPLVEYTRDRLHRETLRSF), 829 to 850 (GRYELTTAYTPAGQLQSQHLNS), 851 to 871 (LLSDRDYTWNDNGELIRISSP), 872 to 894 (RQTRSYSYSTTGRLTGVHTTAAN), 895 to 930 (LDIRIPYATDPAGNRLPDPELHPDSTLSMWPDNRIA), 931 to 959 (RDAHYLYRYDRHGRLTEKTDLIPEGVIRT), 960 to 984 (DDERTHRYHYDSQHRLVHYTRTQYE), 985 to 1019 (EPLVESRYLYDPLGRRVAKRVWRRERDLTGWMSLS), and 1162 to 1186 (GTTEWCAEYDEWGNLLNEENPHQLQ). A 28 X approximate tandem repeats region spans residues 330–1186 (GKQVRSFTYD…LNEENPHQLQ (857 aa)). The segment at 1356-1377 (DAKSTQKAWNCRHSRQSNDKKR) is disordered.

This sequence belongs to the RHS family.

Its function is as follows. Rhs elements have a nonessential function. They may play an important role in the natural ecology of the cell. This Escherichia coli (strain K12) protein is Protein RhsA (rhsA).